We begin with the raw amino-acid sequence, 84 residues long: Putative membrane protein insertion efficiency factor (84 aa).

Residues 63 to 84 (LGGSGYDPPPPPKTPRKWKCEE) form a disordered region.

It belongs to the UPF0161 family.

It is found in the cell inner membrane. Its function is as follows. Could be involved in insertion of integral membrane proteins into the membrane. The chain is Putative membrane protein insertion efficiency factor from Caulobacter sp. (strain K31).